A 163-amino-acid chain; its full sequence is Putative 4-hydroxy-4-methyl-2-oxoglutarate aldolase (163 aa).

Residues 76–79 (GDML) and arginine 98 contribute to the substrate site. A divalent metal cation is bound at residue aspartate 99.

This sequence belongs to the class II aldolase/RraA-like family. Homotrimer. Requires a divalent metal cation as cofactor.

The enzyme catalyses 4-hydroxy-4-methyl-2-oxoglutarate = 2 pyruvate. The catalysed reaction is oxaloacetate + H(+) = pyruvate + CO2. In terms of biological role, catalyzes the aldol cleavage of 4-hydroxy-4-methyl-2-oxoglutarate (HMG) into 2 molecules of pyruvate. Also contains a secondary oxaloacetate (OAA) decarboxylase activity due to the common pyruvate enolate transition state formed following C-C bond cleavage in the retro-aldol and decarboxylation reactions. This chain is Putative 4-hydroxy-4-methyl-2-oxoglutarate aldolase, found in Pseudomonas putida (strain ATCC 47054 / DSM 6125 / CFBP 8728 / NCIMB 11950 / KT2440).